Here is a 151-residue protein sequence, read N- to C-terminus: MERPEQELIRQSWRAVSRSPLEHGTVLFARLFDLEPDLLPLFQYNCRQFSSPEDCLSSPEFLDHIRKVMLVIDAAVTNVEDLSSLEEYLAGLGRKHRAVGVRFSSFSTVGESLLYMLEKCLGPAFTPATRAAWSQLYGAVVQAMSRGWDGE.

Residues Met-1–Asp-149 enclose the Globin domain. Heme b contacts are provided by His-64 and His-96.

The protein belongs to the globin family. Monomer. Homodimer and homotetramer; disulfide-linked. Mainly monomeric but also detected as part of homodimers and homotetramers. Interacts with 14-3-3 proteins; regulates the phosphorylation of NGB. Could interact (ferrous form) with G-alpha(i) proteins (GTP-bound form). Post-translationally, phosphorylated during hypoxia by ERK1/ERK2. Phosphorylation regulates the heme pocket hexacoordination preventing the association of His-64 with the heme metal center. Thereby, promotes the access of dioxygen and nitrite to the heme and stimulates the nitrite reductase activity. Phosphorylation during hypoxia is stabilized by 14-3-3 proteins.

It localises to the cytoplasm. Its subcellular location is the cytosol. The protein localises to the mitochondrion matrix. The catalysed reaction is Fe(III)-heme b-[protein] + nitric oxide + H2O = Fe(II)-heme b-[protein] + nitrite + 2 H(+). Monomeric globin with a bis-histidyl six-coordinate heme-iron atom through which it can bind dioxygen, carbon monoxide and nitric oxide. Could help transport oxygen and increase its availability to the metabolically active neuronal tissues, though its low quantity in tissues as well as its high affinity for dioxygen, which may limit its oxygen-releasing ability, argue against it. The ferrous/deoxygenated form exhibits a nitrite reductase activity and it could produce nitric oxide which in turn inhibits cellular respiration in response to hypoxia. In its ferrous/deoxygenated state, it may also exhibit GDI (Guanine nucleotide Dissociation Inhibitor) activity toward heterotrimeric G-alpha proteins, thereby regulating signal transduction to facilitate neuroprotective responses in the wake of hypoxia and associated oxidative stress. This Oryctolagus cuniculus (Rabbit) protein is Neuroglobin.